The sequence spans 167 residues: Interferon gamma (167 aa).

The signal sequence occupies residues 1–23 (MNYTSFIFAFQLCIILCSSGYYC). Q24 is modified (pyrrolidone carboxylic acid). N-linked (GlcNAc...) asparagine glycosylation is found at N39 and N107.

It belongs to the type II (or gamma) interferon family. As to quaternary structure, homodimer. Interacts with IFNGR1 (via extracellular domain); this interaction promotes IFNGR1 dimerization. Released primarily from activated T lymphocytes.

It is found in the secreted. Functionally, type II interferon produced by immune cells such as T-cells and NK cells that plays crucial roles in antimicrobial, antiviral, and antitumor responses by activating effector immune cells and enhancing antigen presentation. Primarily signals through the JAK-STAT pathway after interaction with its receptor IFNGR1 to affect gene regulation. Upon IFNG binding, IFNGR1 intracellular domain opens out to allow association of downstream signaling components JAK2, JAK1 and STAT1, leading to STAT1 activation, nuclear translocation and transcription of IFNG-regulated genes. Many of the induced genes are transcription factors such as IRF1 that are able to further drive regulation of a next wave of transcription. Plays a role in class I antigen presentation pathway by inducing a replacement of catalytic proteasome subunits with immunoproteasome subunits. In turn, increases the quantity, quality, and repertoire of peptides for class I MHC loading. Increases the efficiency of peptide generation also by inducing the expression of activator PA28 that associates with the proteasome and alters its proteolytic cleavage preference. Up-regulates as well MHC II complexes on the cell surface by promoting expression of several key molecules such as cathepsins B/CTSB, H/CTSH, and L/CTSL. Participates in the regulation of hematopoietic stem cells during development and under homeostatic conditions by affecting their development, quiescence, and differentiation. The chain is Interferon gamma (IFNG) from Felis catus (Cat).